The following is a 299-amino-acid chain: Serine/threonine-protein kinase 1 (299 aa).

In terms of domain architecture, Protein kinase spans isoleucine 39–phenylalanine 277. ATP contacts are provided by residues phenylalanine 45–valine 53 and lysine 66. The active-site Proton acceptor is the aspartate 153.

The protein belongs to the protein kinase superfamily. Ser/Thr protein kinase family.

The protein resides in the virion. It is found in the host cytoplasm. The enzyme catalyses L-seryl-[protein] + ATP = O-phospho-L-seryl-[protein] + ADP + H(+). It carries out the reaction L-threonyl-[protein] + ATP = O-phospho-L-threonyl-[protein] + ADP + H(+). In terms of biological role, essential for viral replication. It may mediate the virus progression through DNA replication. This African swine fever virus (isolate Tick/Malawi/Lil 20-1/1983) (ASFV) protein is Serine/threonine-protein kinase 1.